A 247-amino-acid chain; its full sequence is PF03932 family protein CutC (247 aa).

This sequence belongs to the CutC family.

Its subcellular location is the cytoplasm. The sequence is that of PF03932 family protein CutC from Enterobacter sp. (strain 638).